The chain runs to 97 residues: Large ribosomal subunit protein bL27 (97 aa).

The propeptide occupies 1–12 (MLKMNLANLQLF). The interval 14 to 37 (HKKGGGSTSNGRDSQAKRLGAKAA) is disordered.

It belongs to the bacterial ribosomal protein bL27 family. The N-terminus is cleaved by ribosomal processing cysteine protease Prp.

This is Large ribosomal subunit protein bL27 from Streptococcus agalactiae serotype III (strain NEM316).